Consider the following 190-residue polypeptide: Crossover junction endodeoxyribonuclease RuvC (190 aa).

Active-site residues include D8, E67, and D139. Positions 8, 67, and 139 each coordinate Mg(2+).

It belongs to the RuvC family. As to quaternary structure, homodimer which binds Holliday junction (HJ) DNA. The HJ becomes 2-fold symmetrical on binding to RuvC with unstacked arms; it has a different conformation from HJ DNA in complex with RuvA. In the full resolvosome a probable DNA-RuvA(4)-RuvB(12)-RuvC(2) complex forms which resolves the HJ. The cofactor is Mg(2+).

It is found in the cytoplasm. The catalysed reaction is Endonucleolytic cleavage at a junction such as a reciprocal single-stranded crossover between two homologous DNA duplexes (Holliday junction).. The RuvA-RuvB-RuvC complex processes Holliday junction (HJ) DNA during genetic recombination and DNA repair. Endonuclease that resolves HJ intermediates. Cleaves cruciform DNA by making single-stranded nicks across the HJ at symmetrical positions within the homologous arms, yielding a 5'-phosphate and a 3'-hydroxyl group; requires a central core of homology in the junction. The consensus cleavage sequence is 5'-(A/T)TT(C/G)-3'. Cleavage occurs on the 3'-side of the TT dinucleotide at the point of strand exchange. HJ branch migration catalyzed by RuvA-RuvB allows RuvC to scan DNA until it finds its consensus sequence, where it cleaves and resolves the cruciform DNA. In Haemophilus influenzae (strain PittGG), this protein is Crossover junction endodeoxyribonuclease RuvC.